Reading from the N-terminus, the 161-residue chain is Abscisic acid receptor PYL11 (161 aa).

Residues 3–154 (TSQKYHTCGS…NLKSLAKLSE (152 aa)) form an START-like region. Abscisate is bound by residues K39, 68–73 (AEFSRE), 95–101 (RLVNYRS), and E119. A Gate loop motif is present at residues 64 to 68 (SGLPA). Residues 94-96 (HRL) carry the Latch loop motif.

It belongs to the PYR/PYL/RCAR abscisic acid intracellular receptor family. In terms of assembly, homodimer. Binds ABA on one subunit only. Interacts with PP2Cs. Binds to CARs protein in an ABA-independent manner, both at the plasma membrane and in the nucleus. Interacts with I-2 and TOPP1.

It localises to the cytoplasm. The protein localises to the nucleus. Its subcellular location is the cell membrane. Its function is as follows. Receptor for abscisic acid (ABA) required for ABA-mediated responses such as stomatal closure and germination inhibition. Inhibits the activity of group-A protein phosphatases type 2C (PP2Cs) when activated by ABA. Suppresses the phosphatase activity of TOPP1 in a dose-dependent manner in vitro. The protein is Abscisic acid receptor PYL11 (PYL11) of Arabidopsis thaliana (Mouse-ear cress).